The primary structure comprises 495 residues: Siroheme synthase 2 (495 aa).

The segment at 1–205 (MDHYPIFLNL…GREREAEQAM (205 aa)) is precorrin-2 dehydrogenase /sirohydrochlorin ferrochelatase. Residues 22–23 (ET) and 43–44 (PD) each bind NAD(+). Residue S130 is modified to Phosphoserine. Residues 220–495 (GEVYLVGAGP…HPAPADTEQA (276 aa)) are uroporphyrinogen-III C-methyltransferase. P229 is a binding site for S-adenosyl-L-methionine. Catalysis depends on D252, which acts as the Proton acceptor. The active-site Proton donor is the K274. S-adenosyl-L-methionine-binding positions include 305–307 (GGD), I310, 335–336 (TA), M387, and A416. The segment at 471–495 (FPEHGCLRGEPRPTRHPAPADTEQA) is disordered.

This sequence in the N-terminal section; belongs to the precorrin-2 dehydrogenase / sirohydrochlorin ferrochelatase family. In the C-terminal section; belongs to the precorrin methyltransferase family.

The enzyme catalyses uroporphyrinogen III + 2 S-adenosyl-L-methionine = precorrin-2 + 2 S-adenosyl-L-homocysteine + H(+). It carries out the reaction precorrin-2 + NAD(+) = sirohydrochlorin + NADH + 2 H(+). It catalyses the reaction siroheme + 2 H(+) = sirohydrochlorin + Fe(2+). It functions in the pathway cofactor biosynthesis; adenosylcobalamin biosynthesis; precorrin-2 from uroporphyrinogen III: step 1/1. Its pathway is cofactor biosynthesis; adenosylcobalamin biosynthesis; sirohydrochlorin from precorrin-2: step 1/1. The protein operates within porphyrin-containing compound metabolism; siroheme biosynthesis; precorrin-2 from uroporphyrinogen III: step 1/1. It participates in porphyrin-containing compound metabolism; siroheme biosynthesis; siroheme from sirohydrochlorin: step 1/1. It functions in the pathway porphyrin-containing compound metabolism; siroheme biosynthesis; sirohydrochlorin from precorrin-2: step 1/1. Multifunctional enzyme that catalyzes the SAM-dependent methylations of uroporphyrinogen III at position C-2 and C-7 to form precorrin-2 via precorrin-1. Then it catalyzes the NAD-dependent ring dehydrogenation of precorrin-2 to yield sirohydrochlorin. Finally, it catalyzes the ferrochelation of sirohydrochlorin to yield siroheme. This Halorhodospira halophila (strain DSM 244 / SL1) (Ectothiorhodospira halophila (strain DSM 244 / SL1)) protein is Siroheme synthase 2.